The chain runs to 608 residues: MLLDEIKRMSYDELKRLAEDIRKRITEVVLKNGGHLASNLGTIELTLALYRVFDPREDAIIWDTGHQAYTHKILTGRDDLFHTIRTFGGLSGFVTRRESPLDWFGTGHAGTSIAAGLGFEKAFELLGEKRHVVVVIGDGALTSGMALEALNQLKNLNSKMKIILNDNGMSISPNVGGLAYHLSKLRTSPIYLKGKKVLKKVLEKTEIGFEVEEEMKYLRDSLKGMIQGTNFFESLGLKYFGPFDGHNIELLEKVFKRIRDYDYSSVVHVVTKKGKGFTAAEENPTKYHSASPSGKPKMLSYSELLGHTLSRVAREDKKIVAITAAMADGTGLSIFQKEHPDRFFDLGITEQTCVTFGAALGLHGMKPVVAIYSTFLQRAYDQIIHDVALQNAPVLFAIDRSGVVGEDGPTHHGLFDINYLLPVPNMKIISPSSPEEFVNSLYTVLKHLDGPVAIRYPKESFYGEVESLLENMKEIDLGWKILKRGREAAIIATGTILNEVLKIPLDVTVVNALTVKPLDTAVLKEIARDHDLIITVEEAMKIGGFGSFVAQRLQEMGWQGKIVNLGVEDLFVPHGGRKELLSMLGLDSEGLTKTVLTYIKARSREGKV.

Residues His66 and 107–109 each bind thiamine diphosphate; that span reads GHA. Residue Asp138 coordinates Mg(2+). Thiamine diphosphate-binding positions include 139 to 140, Asn167, Phe277, and Glu350; that span reads GA. Asn167 contributes to the Mg(2+) binding site.

Belongs to the transketolase family. DXPS subfamily. As to quaternary structure, homodimer. Mg(2+) is required as a cofactor. It depends on thiamine diphosphate as a cofactor.

It catalyses the reaction D-glyceraldehyde 3-phosphate + pyruvate + H(+) = 1-deoxy-D-xylulose 5-phosphate + CO2. It participates in metabolic intermediate biosynthesis; 1-deoxy-D-xylulose 5-phosphate biosynthesis; 1-deoxy-D-xylulose 5-phosphate from D-glyceraldehyde 3-phosphate and pyruvate: step 1/1. Functionally, catalyzes the acyloin condensation reaction between C atoms 2 and 3 of pyruvate and glyceraldehyde 3-phosphate to yield 1-deoxy-D-xylulose-5-phosphate (DXP). The protein is 1-deoxy-D-xylulose-5-phosphate synthase of Thermotoga maritima (strain ATCC 43589 / DSM 3109 / JCM 10099 / NBRC 100826 / MSB8).